A 98-amino-acid polypeptide reads, in one-letter code: Large ribosomal subunit protein uL23 (98 aa).

This sequence belongs to the universal ribosomal protein uL23 family. Part of the 50S ribosomal subunit. Contacts protein L29, and trigger factor when it is bound to the ribosome.

One of the early assembly proteins it binds 23S rRNA. One of the proteins that surrounds the polypeptide exit tunnel on the outside of the ribosome. Forms the main docking site for trigger factor binding to the ribosome. This Methylorubrum extorquens (strain CM4 / NCIMB 13688) (Methylobacterium extorquens) protein is Large ribosomal subunit protein uL23.